A 405-amino-acid polypeptide reads, in one-letter code: L-carnitine CoA-transferase (405 aa).

The CoA site is built by Lys-97 and Arg-104. Asp-169 functions as the Nucleophile in the catalytic mechanism.

Belongs to the CoA-transferase III family. CaiB subfamily. Homodimer.

It is found in the cytoplasm. The enzyme catalyses crotonobetainyl-CoA + (R)-carnitine = crotonobetaine + (R)-carnitinyl-CoA. It carries out the reaction 4-(trimethylamino)butanoyl-CoA + (R)-carnitine = (R)-carnitinyl-CoA + 4-(trimethylamino)butanoate. It functions in the pathway amine and polyamine metabolism; carnitine metabolism. In terms of biological role, catalyzes the reversible transfer of the CoA moiety from gamma-butyrobetainyl-CoA to L-carnitine to generate L-carnitinyl-CoA and gamma-butyrobetaine. Is also able to catalyze the reversible transfer of the CoA moiety from gamma-butyrobetainyl-CoA or L-carnitinyl-CoA to crotonobetaine to generate crotonobetainyl-CoA. The polypeptide is L-carnitine CoA-transferase (Escherichia fergusonii (strain ATCC 35469 / DSM 13698 / CCUG 18766 / IAM 14443 / JCM 21226 / LMG 7866 / NBRC 102419 / NCTC 12128 / CDC 0568-73)).